The following is a 502-amino-acid chain: Vicilin Jug r 6.0101 (502 aa).

Residues 1–27 form the signal peptide; the sequence is MAFKPKIPIALLLLTSLLAICAGLALA. Residues 67–84 show a composition bias toward basic and acidic residues; it reads ARERAERRRSEEGSSREE. Residues 67 to 100 form a disordered region; it reads ARERAERRRSEEGSSREEGYEEEELGGEREEENP. Residues 85–100 are compositionally biased toward acidic residues; it reads GYEEEELGGEREEENP. 2 consecutive Cupin type-1 domains span residues 101 to 259 and 302 to 475; these read YVFE…DQLE and FNLF…REVE. A glycan (N-linked (GlcNAc...) asparagine) is linked at asparagine 340. The disordered stretch occupies residues 374–401; that stretch reads HLSSSGSRGQREGSGSSRRRSRSGPSYQ. Residues 376–389 show a composition bias toward low complexity; that stretch reads SSSGSRGQREGSGS.

It belongs to the 7S seed storage protein family. As to quaternary structure, homotrimer. N-glycosylated; paucimannose-type structures containing xylose. Expressed in seed (at protein level).

Functionally, seed storage protein. This chain is Vicilin Jug r 6.0101, found in Juglans regia (English walnut).